The primary structure comprises 431 residues: Asparagine--tRNA ligase (431 aa).

The protein belongs to the class-II aminoacyl-tRNA synthetase family.

Its subcellular location is the cytoplasm. The enzyme catalyses tRNA(Asn) + L-asparagine + ATP = L-asparaginyl-tRNA(Asn) + AMP + diphosphate + H(+). The protein is Asparagine--tRNA ligase of Thermococcus kodakarensis (strain ATCC BAA-918 / JCM 12380 / KOD1) (Pyrococcus kodakaraensis (strain KOD1)).